We begin with the raw amino-acid sequence, 38 residues long: TNGVPGKCTKPGGCSTYCRDTTGTMGLCKNSKCYCNKY.

3 disulfide bridges follow: C8-C28, C14-C33, and C18-C35.

Belongs to the short scorpion toxin superfamily. Potassium channel inhibitor family. Expressed by the venom gland.

It localises to the secreted. Functionally, a probable toxin that has no activity on the tested mammalian voltage-gated potassium channels (when tested at 1 uM) and is not toxic to mice. It resembles alpha toxins that block voltage-gated potassium channels. The sequence is that of Toxin Bot33 from Buthus occitanus tunetanus (Common European scorpion).